The sequence spans 542 residues: Calcium/calmodulin-dependent protein kinase type II subunit beta (542 aa).

In terms of domain architecture, Protein kinase spans 14–272; that stretch reads YQLYEDIGKG…AHEALKHPWV (259 aa). Phosphotyrosine is present on tyrosine 17. Residues 20–28 and lysine 43 each bind ATP; that span reads IGKGAFSVV. Aspartate 136 acts as the Proton acceptor in catalysis. An autoinhibitory domain region spans residues 283–292; it reads HRQETVECLK. Threonine 287 is modified (phosphothreonine; by autocatalysis). The segment at 291–301 is calmodulin-binding; that stretch reads LKKFNARRKLK. Phosphothreonine; by autocatalysis is present on residues threonine 306 and threonine 307. Positions 349 to 376 are disordered; sequence ADGVKPQTNSTKNSSAITSPKGSLPPAA. Residues 354 to 369 are compositionally biased toward polar residues; sequence PQTNSTKNSSAITSPK. Residues serine 367, serine 371, serine 394, and serine 397 each carry the phosphoserine modification. A phosphothreonine mark is found at threonine 400 and threonine 401.

It belongs to the protein kinase superfamily. CAMK Ser/Thr protein kinase family. CaMK subfamily. CAMK2 is composed of 4 different chains: alpha (CAMK2A), beta (CAMK2B), gamma (CAMK2G), and delta (CAMK2D). The different isoforms assemble into homo- or heteromultimeric holoenzymes composed of 12 subunits with two hexameric rings stacked one on top of the other. Interacts with SYNGAP1, CAMK2N2 and MPDZ. Interacts with FOXO3. Interacts (when in a kinase inactive state not associated with calmodulin) with ARC; leading to target ARC to inactive synapses. Interacts with CAMK2N1; this interaction requires CAMK2B activation by Ca(2+). In terms of processing, autophosphorylation of Thr-287 following activation by Ca(2+)/calmodulin. Phosphorylation of Thr-287 locks the kinase into an activated state.

It is found in the cytoplasm. Its subcellular location is the cytoskeleton. The protein localises to the microtubule organizing center. The protein resides in the centrosome. It localises to the sarcoplasmic reticulum membrane. It is found in the synapse. It carries out the reaction L-seryl-[protein] + ATP = O-phospho-L-seryl-[protein] + ADP + H(+). It catalyses the reaction L-threonyl-[protein] + ATP = O-phospho-L-threonyl-[protein] + ADP + H(+). With respect to regulation, activated by Ca(2+)/calmodulin. Binding of calmodulin results in conformational change that relieves intrasteric autoinhibition and allows autophosphorylation of Thr-287 which turns the kinase in a constitutively active form and confers to the kinase a Ca(2+)-independent activity. Calcium/calmodulin-dependent protein kinase that functions autonomously after Ca(2+)/calmodulin-binding and autophosphorylation, and is involved in dendritic spine and synapse formation, neuronal plasticity and regulation of sarcoplasmic reticulum Ca(2+) transport in skeletal muscle. In neurons, plays an essential structural role in the reorganization of the actin cytoskeleton during plasticity by binding and bundling actin filaments in a kinase-independent manner. This structural function is required for correct targeting of CaMK2A, which acts downstream of NMDAR to promote dendritic spine and synapse formation and maintain synaptic plasticity which enables long-term potentiation (LTP) and hippocampus-dependent learning. In developing hippocampal neurons, promotes arborization of the dendritic tree and in mature neurons, promotes dendritic remodeling. Also regulates the migration of developing neurons. Participates in the modulation of skeletal muscle function in response to exercise. In slow-twitch muscles, is involved in regulation of sarcoplasmic reticulum (SR) Ca(2+) transport and in fast-twitch muscle participates in the control of Ca(2+) release from the SR through phosphorylation of triadin, a ryanodine receptor-coupling factor, and phospholamban (PLN/PLB), an endogenous inhibitor of SERCA2A/ATP2A2. In response to interferon-gamma (IFN-gamma) stimulation, catalyzes phosphorylation of STAT1, stimulating the JAK-STAT signaling pathway. Phosphorylates reticulophagy regulator RETREG1 at 'Thr-134' under endoplasmic reticulum stress conditions which enhances RETREG1 oligomerization and its membrane scission and reticulophagy activity. The sequence is that of Calcium/calmodulin-dependent protein kinase type II subunit beta (Camk2b) from Mus musculus (Mouse).